A 971-amino-acid polypeptide reads, in one-letter code: Exportin-2 (971 aa).

N-acetylmethionine is present on Met-1. Residues Ala-29–Ser-102 form the Importin N-terminal domain. Ser-112 is modified (phosphoserine). Lys-574 and Lys-824 each carry N6-acetyllysine. Ser-931 bears the Phosphoserine mark.

This sequence belongs to the XPO2/CSE1 family. Found in a complex with CSE1L/XPO2, Ran and KPNA2. Binds with high affinity to importin-alpha only in the presence of RanGTP. The complex is dissociated by the combined action of RanBP1 and RanGAP1. Interacts with CFTR. In terms of tissue distribution, detected in brain, placenta, ovary, testis and trachea (at protein level). Widely expressed. Highly expressed in testis and in proliferating cells.

The protein localises to the cytoplasm. The protein resides in the nucleus. Export receptor for importin-alpha. Mediates importin-alpha re-export from the nucleus to the cytoplasm after import substrates (cargos) have been released into the nucleoplasm. In the nucleus binds cooperatively to importin-alpha and to the GTPase Ran in its active GTP-bound form. Docking of this trimeric complex to the nuclear pore complex (NPC) is mediated through binding to nucleoporins. Upon transit of a nuclear export complex into the cytoplasm, disassembling of the complex and hydrolysis of Ran-GTP to Ran-GDP (induced by RANBP1 and RANGAP1, respectively) cause release of the importin-alpha from the export receptor. CSE1L/XPO2 then return to the nuclear compartment and mediate another round of transport. The directionality of nuclear export is thought to be conferred by an asymmetric distribution of the GTP- and GDP-bound forms of Ran between the cytoplasm and nucleus. The sequence is that of Exportin-2 (CSE1L) from Homo sapiens (Human).